The sequence spans 290 residues: NAD kinase (290 aa).

Asp-73 serves as the catalytic Proton acceptor. NAD(+) is bound by residues 73–74 (DG), 147–148 (ND), Arg-158, Arg-175, Asp-177, 188–193 (TAYALS), and Gln-246.

This sequence belongs to the NAD kinase family. The cofactor is a divalent metal cation.

The protein localises to the cytoplasm. It catalyses the reaction NAD(+) + ATP = ADP + NADP(+) + H(+). Involved in the regulation of the intracellular balance of NAD and NADP, and is a key enzyme in the biosynthesis of NADP. Catalyzes specifically the phosphorylation on 2'-hydroxyl of the adenosine moiety of NAD to yield NADP. In Thiobacillus denitrificans (strain ATCC 25259 / T1), this protein is NAD kinase.